A 156-amino-acid polypeptide reads, in one-letter code: Small ribosomal subunit protein uS7 (156 aa).

It belongs to the universal ribosomal protein uS7 family. In terms of assembly, part of the 30S ribosomal subunit. Contacts proteins S9 and S11.

One of the primary rRNA binding proteins, it binds directly to 16S rRNA where it nucleates assembly of the head domain of the 30S subunit. Is located at the subunit interface close to the decoding center, probably blocks exit of the E-site tRNA. The sequence is that of Small ribosomal subunit protein uS7 from Shewanella sp. (strain W3-18-1).